The sequence spans 84 residues: Small ribosomal subunit protein bS18 (84 aa).

It belongs to the bacterial ribosomal protein bS18 family. As to quaternary structure, part of the 30S ribosomal subunit. Forms a tight heterodimer with protein bS6.

Its function is as follows. Binds as a heterodimer with protein bS6 to the central domain of the 16S rRNA, where it helps stabilize the platform of the 30S subunit. The sequence is that of Small ribosomal subunit protein bS18 from Methylorubrum extorquens (strain CM4 / NCIMB 13688) (Methylobacterium extorquens).